We begin with the raw amino-acid sequence, 209 residues long: Glycolipid transfer protein A (209 aa).

2 tandem repeats follow at residues 45-55 (IKADITGNITK) and 56-66 (IRSVYESNPTK). The interval 45-66 (IKADITGNITKIRSVYESNPTK) is 2 X 12 AA approximate tandem repeats. 48–55 (DITGNITK) is a beta-D-galactosyl-(1-&gt;4)-beta-D-glucosyl-(1&lt;-&gt;1)-N-[(9Z)-octadecenoyl]-sphing-4-enine binding site. Beta-D-galactosyl-(1-&gt;4)-beta-D-glucosyl-(1&lt;-&gt;1)-N-[(9Z)-octadecenoyl]-sphing-4-enine is bound by residues H140 and Y207.

The protein belongs to the GLTP family.

It localises to the cytoplasm. In terms of biological role, accelerates the intermembrane transfer of various glycolipids. Catalyzes the transfer of various glycosphingolipids between membranes but does not catalyze the transfer of phospholipids. May be involved in the intracellular translocation of glucosylceramides. This Xenopus laevis (African clawed frog) protein is Glycolipid transfer protein A (gltp-a).